Reading from the N-terminus, the 204-residue chain is Histone H3-like centromeric protein CSE4 (204 aa).

The tract at residues 68 to 107 (RVAEPAAAESRADGAREEERAARPARPRETRRIAKKPQRY) is disordered. A compositionally biased stretch (basic and acidic residues) spans 77 to 99 (SRADGAREEERAARPARPRETRR). The H3-like stretch occupies residues 89–202 (ARPARPRETR…MQLARRIRGQ (114 aa)).

This sequence belongs to the histone H3 family. Component of centromeric nucleosomes, where DNA is wrapped around a histone octamer core. The octamer contains two molecules each of H2A, H2B, CSE4/CENPA and H4 assembled in one CSE4-H4 heterotetramer and two H2A-H2B heterodimers. Interacts with the inner kinetochore. Ubiquitinated. Is degraded through ubiquitin-mediated proteolysis when not protected by its association to the kinetochore.

The protein resides in the nucleus. The protein localises to the chromosome. Its subcellular location is the centromere. Its function is as follows. Histone H3-like nucleosomal protein that is specifically found in centromeric nucleosomes. Replaces conventional H3 in the nucleosome core of centromeric chromatin that serves as an assembly site for the inner kinetochore. Required for recruitment and assembly of kinetochore proteins, mitotic progression and chromosome segregation. May serve as an epigenetic mark that propagates centromere identity through replication and cell division. This Eremothecium gossypii (strain ATCC 10895 / CBS 109.51 / FGSC 9923 / NRRL Y-1056) (Yeast) protein is Histone H3-like centromeric protein CSE4 (CSE4).